Reading from the N-terminus, the 160-residue chain is Cytochrome b6-f complex subunit 4 (160 aa).

The next 3 helical transmembrane spans lie at 36-56, 95-115, and 128-148; these read LLYI…GLAV, LLGI…PFIE, and VAMT…IGAA.

This sequence belongs to the cytochrome b family. PetD subfamily. The 4 large subunits of the cytochrome b6-f complex are cytochrome b6, subunit IV (17 kDa polypeptide, PetD), cytochrome f and the Rieske protein, while the 4 small subunits are PetG, PetL, PetM and PetN. The complex functions as a dimer.

The protein localises to the cellular thylakoid membrane. Its function is as follows. Component of the cytochrome b6-f complex, which mediates electron transfer between photosystem II (PSII) and photosystem I (PSI), cyclic electron flow around PSI, and state transitions. The protein is Cytochrome b6-f complex subunit 4 of Synechococcus sp. (strain CC9902).